The following is a 547-amino-acid chain: MTAKDILFDADARAKLKVGVDKLANAVKVTLGPAGRNVLIDKKFGAPTSTKDGVTVAKEVELEDAIENMGAQMVREVASKTSDVAGDGTTTATVLAQAIYREGLKNVAAGARPIDLKRGIDRAVKEVVAELRTISRSISGKKEIAQVGTISANNDPEIGELIAEAMDKVGKDGVITVEEAKGMDTELKVVEGMQFDRGYLSPYFVTNSESMEAELDDALILIYDKKISNMKELLPILEKGAQSGRPLLIIAEDIEGEALATLVVNKLRGTLKVCAVKAPGFGDRRKAMLDDIAILTGGTVISEEKGYKLENATINYLGQAARVSLDKDNTTIVEGKGTQEEIKARINEIKGQIDKSTSDYDTEKLQERLAKLSGGVAVLNIGASTEVEMKEKKARVEDALHATRAAVQEGIVVGGGVALIRAIKGLDNAKPDNDDQKTGIEIIRRALEEPLRQIVANTGTTDGAVVLEHVKNGEGDYGFNARTEQYENLVEAGVVDPTKVTRSALENAASVASILLTTEACITDIKENTPDMPAMPPGGMGGMGGMY.

ATP contacts are provided by residues 30-33, Lys51, 87-91, Gly415, and Asp496; these read TLGP and DGTTT. Residues 527-547 form a disordered region; sequence ENTPDMPAMPPGGMGGMGGMY. The segment covering 538–547 has biased composition (gly residues); the sequence is GGMGGMGGMY.

This sequence belongs to the chaperonin (HSP60) family. In terms of assembly, forms a cylinder of 14 subunits composed of two heptameric rings stacked back-to-back. Interacts with the co-chaperonin GroES.

It is found in the cytoplasm. The catalysed reaction is ATP + H2O + a folded polypeptide = ADP + phosphate + an unfolded polypeptide.. Functionally, together with its co-chaperonin GroES, plays an essential role in assisting protein folding. The GroEL-GroES system forms a nano-cage that allows encapsulation of the non-native substrate proteins and provides a physical environment optimized to promote and accelerate protein folding. The polypeptide is Chaperonin GroEL (Chlorobium phaeovibrioides (strain DSM 265 / 1930) (Prosthecochloris vibrioformis (strain DSM 265))).